The primary structure comprises 453 residues: MNRRRERVVVVGAGLAGSLVALYLARQGHEVDVFERRPDPRSALGRPEGRSINLGLSARGMRALDGVGLLADVLKHSVPMRDRVVHSPDGGIRTQPYGVREHEILHSVLREELISLVVTAAEAEPGVRFHFDSLLASLDRETGTVDVAPTAGGETRTVTADLIVGADGAFSTIRQQMQHGLRANYAQEFLPWGYKELTIPVDADGQPRVRLEALHVWPGHEAMMIAHPNRDGSLTCTLFMAHEGPVSFAALDTPTAVRDFFRQRFPDAEELMPDLVREVTEHPVGHLVTVRSDPWRYADRVVLIGDAAHAVYPFYGQGMNSAFEDCVVLDECLTAHPDRATALAAYEAARKPHTDVLADLSTANFEDLRDRVHRLGYSASAAADRLLARLLPQHWVPLYGMVAHTTIPYADALARAKRQDRILRQAGAGLALVTVLAATAALRAGRRRRANRR.

It belongs to the aromatic-ring hydroxylase family. KMO subfamily. The cofactor is FAD.

The catalysed reaction is L-kynurenine + NADPH + O2 + H(+) = 3-hydroxy-L-kynurenine + NADP(+) + H2O. It functions in the pathway cofactor biosynthesis; NAD(+) biosynthesis; quinolinate from L-kynurenine: step 1/3. In terms of biological role, catalyzes the hydroxylation of L-kynurenine (L-Kyn) to form 3-hydroxy-L-kynurenine (L-3OHKyn). Required for synthesis of quinolinic acid. The protein is Kynurenine 3-monooxygenase of Salinispora tropica (strain ATCC BAA-916 / DSM 44818 / JCM 13857 / NBRC 105044 / CNB-440).